Here is a 223-residue protein sequence, read N- to C-terminus: MSDQTPQFGQTPSEAEPDAVALEAGRKLFAGECTFFHGTQRLDQLPPPMGVEIAFAGRSNVGKSTLVNALTGRKTLARASSQPGRTKQLNFFNLADQLVLVDMPGYGYAQAAKDVKEDWQGLMFSYLRGRPNLRRVMLLVDARVEFKASDIAVMELLDKAAVTFQLVVTKADAVKPTPLQRRVADVYAAARAHPAAHPHVFVTSSDTGSGIAELRAALAGLTD.

Residues 49-223 form the EngB-type G domain; sequence MGVEIAFAGR…LRAALAGLTD (175 aa). Residues 57–64, 84–88, 102–105, 169–172, and 203–205 each bind GTP; these read GRSNVGKS, GRTKQ, DMPG, TKAD, and TSS. Mg(2+) contacts are provided by serine 64 and threonine 86.

It belongs to the TRAFAC class TrmE-Era-EngA-EngB-Septin-like GTPase superfamily. EngB GTPase family. The cofactor is Mg(2+).

Necessary for normal cell division and for the maintenance of normal septation. The polypeptide is Probable GTP-binding protein EngB (Granulibacter bethesdensis (strain ATCC BAA-1260 / CGDNIH1)).